A 161-amino-acid polypeptide reads, in one-letter code: Regulator of ribonuclease activity A (161 aa).

It belongs to the RraA family. As to quaternary structure, homotrimer. Binds to both RNA-binding sites in the C-terminal region of Rne and to RhlB.

It is found in the cytoplasm. Its function is as follows. Globally modulates RNA abundance by binding to RNase E (Rne) and regulating its endonucleolytic activity. Can modulate Rne action in a substrate-dependent manner by altering the composition of the degradosome. Modulates RNA-binding and helicase activities of the degradosome. The chain is Regulator of ribonuclease activity A from Shigella dysenteriae serotype 1 (strain Sd197).